We begin with the raw amino-acid sequence, 323 residues long: V-type ATP synthase subunit C (323 aa).

Belongs to the V-ATPase V0D/AC39 subunit family.

Its function is as follows. Produces ATP from ADP in the presence of a proton gradient across the membrane. The protein is V-type ATP synthase subunit C (atpC) of Thermus thermophilus (strain ATCC 27634 / DSM 579 / HB8).